The primary structure comprises 246 residues: Biosynthetic peptidoglycan transglycosylase (246 aa).

The chain crosses the membrane as a helical span at residues 20–42 (WLRWLMAAPLLFAAASVLQVLIL).

The protein belongs to the glycosyltransferase 51 family.

It localises to the cell inner membrane. The catalysed reaction is [GlcNAc-(1-&gt;4)-Mur2Ac(oyl-L-Ala-gamma-D-Glu-L-Lys-D-Ala-D-Ala)](n)-di-trans,octa-cis-undecaprenyl diphosphate + beta-D-GlcNAc-(1-&gt;4)-Mur2Ac(oyl-L-Ala-gamma-D-Glu-L-Lys-D-Ala-D-Ala)-di-trans,octa-cis-undecaprenyl diphosphate = [GlcNAc-(1-&gt;4)-Mur2Ac(oyl-L-Ala-gamma-D-Glu-L-Lys-D-Ala-D-Ala)](n+1)-di-trans,octa-cis-undecaprenyl diphosphate + di-trans,octa-cis-undecaprenyl diphosphate + H(+). It functions in the pathway cell wall biogenesis; peptidoglycan biosynthesis. In terms of biological role, peptidoglycan polymerase that catalyzes glycan chain elongation from lipid-linked precursors. The sequence is that of Biosynthetic peptidoglycan transglycosylase from Xanthomonas axonopodis pv. citri (strain 306).